Consider the following 547-residue polypeptide: Sesterfisheric acid synthase (547 aa).

A helical membrane pass occupies residues 19-39 (IMGCSLGTGLLVSMIIYNYFF). 2 N-linked (GlcNAc...) asparagine glycosylation sites follow: N341 and N404. C490 is a binding site for heme.

This sequence belongs to the cytochrome P450 family. The cofactor is heme.

It is found in the membrane. It catalyses the reaction sesterfisherol + 3 reduced [NADPH--hemoprotein reductase] + 3 O2 = sesterfisherate + 3 oxidized [NADPH--hemoprotein reductase] + 4 H2O + 4 H(+). Its pathway is secondary metabolite biosynthesis; terpenoid biosynthesis. In terms of biological role, cytochrome P450 monooxygenase; part of the gene cluster that mediates the biosynthesis of sesterfisheric acid. The bifunctional terpene synthase NfSS converts DMAPP and IPP, and also GGPP, into sesterfisherol. The C-terminal prenyltransferase (PT) domain of NfSS catalyzes formation of GFPP, whereas the N-terminal terpene cyclase (TC) domain catalyzes the cyclization of GFPP to sesterfisherol. The cytochrome P450 monooxygenase NfP450 then catalyzes oxidative modifications of sesterfisherol into sesterfisheric acid. In Neosartorya fischeri (strain ATCC 1020 / DSM 3700 / CBS 544.65 / FGSC A1164 / JCM 1740 / NRRL 181 / WB 181) (Aspergillus fischerianus), this protein is Sesterfisheric acid synthase.